Here is a 203-residue protein sequence, read N- to C-terminus: Adenylyl-sulfate kinase (203 aa).

Residue 35-42 coordinates ATP; it reads GLSGSGKS. The Phosphoserine intermediate role is filled by Ser109.

Belongs to the APS kinase family.

It carries out the reaction adenosine 5'-phosphosulfate + ATP = 3'-phosphoadenylyl sulfate + ADP + H(+). Its pathway is sulfur metabolism; hydrogen sulfide biosynthesis; sulfite from sulfate: step 2/3. Functionally, catalyzes the synthesis of activated sulfate. This chain is Adenylyl-sulfate kinase, found in Geotalea daltonii (strain DSM 22248 / JCM 15807 / FRC-32) (Geobacter daltonii).